A 129-amino-acid chain; its full sequence is M-zodatoxin-Lt8i (129 aa).

Residues 1-20 (MKYFVVALALVAAFACIAES) form the signal peptide. Residues 21-60 (KPAESEHELAEVEEENELADLEDAVWLEHLADLSDLEEAR) constitute a propeptide that is removed on maturation.

It belongs to the cationic peptide 06 (cytoinsectotoxin) family. Expressed by the venom gland.

The protein localises to the secreted. Functionally, insecticidal, cytolytic and antimicrobial peptide. Forms voltage-dependent, ion-permeable channels in membranes. At high concentration causes cell membrane lysis. The protein is M-zodatoxin-Lt8i (cit 1-6) of Lachesana tarabaevi (Spider).